The primary structure comprises 1091 residues: Error-prone DNA polymerase 1 (1091 aa).

Residues 1051 to 1064 (RGDEFHHGMPDDHR) show a composition bias toward basic and acidic residues. The disordered stretch occupies residues 1051-1080 (RGDEFHHGMPDDHRAIRKRPPPSNHDDDEV).

It belongs to the DNA polymerase type-C family. DnaE2 subfamily.

The protein localises to the cytoplasm. The catalysed reaction is DNA(n) + a 2'-deoxyribonucleoside 5'-triphosphate = DNA(n+1) + diphosphate. Functionally, DNA polymerase involved in damage-induced mutagenesis and translesion synthesis (TLS). It is not the major replicative DNA polymerase. The chain is Error-prone DNA polymerase 1 from Agrobacterium fabrum (strain C58 / ATCC 33970) (Agrobacterium tumefaciens (strain C58)).